Reading from the N-terminus, the 166-residue chain is Chemoreceptor glutamine deamidase CheD (166 aa).

It belongs to the CheD family. In terms of assembly, forms a complex with CheC.

The enzyme catalyses L-glutaminyl-[protein] + H2O = L-glutamyl-[protein] + NH4(+). Functionally, deamidates glutamine residues to glutamate on methyl-accepting chemotaxis receptors (MCPs). CheD-mediated MCP deamidation is required for productive communication of the conformational signals of the chemoreceptors to the CheA kinase. This is Chemoreceptor glutamine deamidase CheD from Bacillus velezensis (strain DSM 23117 / BGSC 10A6 / LMG 26770 / FZB42) (Bacillus amyloliquefaciens subsp. plantarum).